The sequence spans 226 residues: Neuron-specific vesicular protein calcyon (226 aa).

Residues 1-23 are disordered; the sequence is MVKLGCSFSGKPGKETGDQDGAA. At 1–88 the chain is on the extracellular side; sequence MVKLGCSFSG…EEGRRLPTAR (88 aa). The helical transmembrane segment at 89-109 threads the bilayer; the sequence is MIAFAMALLGCVLIMYKAIWY. Residues 110–226 lie on the Cytoplasmic side of the membrane; sequence DQFTCPDGFL…AEDVPSQSPK (117 aa). Residues 189–226 are disordered; it reads TAAAAAAAEGNEPSGKPLDMREKEDPQKAEDVPSQSPK. Residues 206-219 are compositionally biased toward basic and acidic residues; that stretch reads LDMREKEDPQKAED.

It belongs to the NSG family. In terms of assembly, interacts with CLTA. In terms of tissue distribution, expressed exclusively in neurons (at protein level). In all age groups, expressed at significantly higher levels in the medial prefrontal and orbital frontal cortices of spontaneously hypertensive rats (SHR), a model of attention deficit-hyperactivity disorder, than Wistar Kyoto (WKY) animals. In the motor cortex, dorsal striatum and nucleus accumbens, expression is significantly elevated in SHR only in younger animals.

Its subcellular location is the cytoplasmic vesicle membrane. The protein localises to the cell membrane. Interacts with clathrin light chain A and stimulates clathrin self-assembly and clathrin-mediated endocytosis. The polypeptide is Neuron-specific vesicular protein calcyon (Caly) (Rattus norvegicus (Rat)).